A 562-amino-acid chain; its full sequence is Zinc finger protein 579 (562 aa).

Residues 1-11 (MDPQPPPPAQG) are compositionally biased toward pro residues. Residues 1–43 (MDPQPPPPAQGSPPHRGRGRGRGRGRGRGRGRGRGGAGAPRAP) form a disordered region. The segment covering 15–33 (HRGRGRGRGRGRGRGRGRG) has biased composition (basic residues). 3 consecutive C2H2-type zinc fingers follow at residues 44-66 (LPCP…RLSH), 72-94 (HACP…LRGH), and 100-123 (LRCA…AQEH). Omega-N-methylarginine is present on R92. The interval 139–203 (TAEPSWGPQD…SESEEAEAGA (65 aa)) is disordered. Phosphoserine is present on residues S194 and S196. 2 C2H2-type zinc fingers span residues 270–292 (HQCS…RLVH) and 298–320 (FVCP…RRVH). The interval 327 to 379 (APLPAAGKKDDKASGARNSAKGPEGGEGAECGGASEGGEGQNGGDAAPARPPA) is disordered. Residues 349-369 (PEGGEGAECGGASEGGEGQNG) show a composition bias toward gly residues. 3 consecutive C2H2-type zinc fingers follow at residues 384–406 (FWCP…GVTH), 412–434 (FQCV…AQVH), and 441–463 (HPCP…QRCH). Residues 477 to 562 (QAQAPTSPPP…HLRGLGGLAS (86 aa)) are disordered. Pro residues-rich tracts occupy residues 482–491 (TSPPPPPPPL) and 512–525 (PSPG…PAPP). A Phosphoserine modification is found at S483.

Belongs to the krueppel C2H2-type zinc-finger protein family.

It localises to the nucleus. May be involved in transcriptional regulation. In Homo sapiens (Human), this protein is Zinc finger protein 579 (ZNF579).